Consider the following 566-residue polypeptide: Erythroid membrane-associated protein (566 aa).

A signal peptide spans 1–29 (MERPSPCGSWLVGCLFTIAVFQPPVQVLG). The Ig-like V-type domain maps to 30 to 139 (DAGKVYIAPL…SSREDNVTLQ (110 aa)). The Extracellular segment spans residues 30–246 (DAGKVYIAPL…PERGSLSSPA (217 aa)). A disulfide bond links Cys47 and Cys123. Residues Asn135 and Asn214 are each glycosylated (N-linked (GlcNAc...) asparagine). Residues 247–267 (VALSVVLPVLGLLILLGIWLI) form a helical membrane-spanning segment. The Cytoplasmic portion of the chain corresponds to 268 to 566 (CKQKKSKEKL…ALKGLKVPSL (299 aa)). The B30.2/SPRY domain occupies 311–509 (KLKRAAANAG…LIICTELQKS (199 aa)). Phosphoserine is present on Ser509.

It belongs to the immunoglobulin superfamily. BTN/MOG family. Post-translationally, glycosylated. Expressed in spleen and bone marrow.

The protein resides in the cell membrane. The protein localises to the cytoplasm. Functionally, possible role as a cell-adhesion or receptor molecule of erythroid cells. This Mus musculus (Mouse) protein is Erythroid membrane-associated protein (Ermap).